A 392-amino-acid chain; its full sequence is MFGTATRPSATRALLLGSGELGKEVAIELQRFGIEVIAADRYPNAPAMQVAHKAHVLDMLDGNALRALVTLVKPDLIIPEIEAIATDTLAQLEQEGVKVVPNARATQLTMNREGIRRLAAEELGLPTSPYRFAQSKEEFIAAVEAIGLPCVVKPVMSSSGKGQSVLRDLAKLDESWTYAQEGGRAGRGKVIVEGFVPFEYEITLLTVRAVDGIHFCDPIGHRQEDGDYRESWQPQAMSTLALARSKEVAAKVVGALGGYGLFGVELFIRGDEVWFSEVSPRPHDTGMVTLISQDLSEFALHVRAILGLPIGTITQYGPSASAVVLRDGHSQDIRYQGIGAALALVSGAQLRLFGKPEIAGRRRLGVALARGQQCEEAVEKAKAVAARVEVIC.

N(1)-(5-phospho-beta-D-ribosyl)glycinamide contacts are provided by residues 20–21 (EL) and E80. ATP-binding positions include R112, K153, 158-163 (SSGKGQ), 193-196 (EGFV), and E201. Positions 117 to 306 (RLAAEELGLP…EFALHVRAIL (190 aa)) constitute an ATP-grasp domain. Residues E265 and E277 each coordinate Mg(2+). N(1)-(5-phospho-beta-D-ribosyl)glycinamide contacts are provided by residues D284, K355, and 362–363 (RR).

The protein belongs to the PurK/PurT family. Homodimer.

The catalysed reaction is N(1)-(5-phospho-beta-D-ribosyl)glycinamide + formate + ATP = N(2)-formyl-N(1)-(5-phospho-beta-D-ribosyl)glycinamide + ADP + phosphate + H(+). The protein operates within purine metabolism; IMP biosynthesis via de novo pathway; N(2)-formyl-N(1)-(5-phospho-D-ribosyl)glycinamide from N(1)-(5-phospho-D-ribosyl)glycinamide (formate route): step 1/1. Its function is as follows. Involved in the de novo purine biosynthesis. Catalyzes the transfer of formate to 5-phospho-ribosyl-glycinamide (GAR), producing 5-phospho-ribosyl-N-formylglycinamide (FGAR). Formate is provided by PurU via hydrolysis of 10-formyl-tetrahydrofolate. The sequence is that of Formate-dependent phosphoribosylglycinamide formyltransferase from Aeromonas salmonicida (strain A449).